A 283-amino-acid chain; its full sequence is Bifunctional protein FolD (283 aa).

NADP(+) is bound by residues Gly-165–Gly-167, Thr-192, and Val-233.

Belongs to the tetrahydrofolate dehydrogenase/cyclohydrolase family. In terms of assembly, homodimer.

The catalysed reaction is (6R)-5,10-methylene-5,6,7,8-tetrahydrofolate + NADP(+) = (6R)-5,10-methenyltetrahydrofolate + NADPH. It catalyses the reaction (6R)-5,10-methenyltetrahydrofolate + H2O = (6R)-10-formyltetrahydrofolate + H(+). It functions in the pathway one-carbon metabolism; tetrahydrofolate interconversion. Catalyzes the oxidation of 5,10-methylenetetrahydrofolate to 5,10-methenyltetrahydrofolate and then the hydrolysis of 5,10-methenyltetrahydrofolate to 10-formyltetrahydrofolate. The protein is Bifunctional protein FolD of Mycolicibacterium smegmatis (strain ATCC 700084 / mc(2)155) (Mycobacterium smegmatis).